A 161-amino-acid polypeptide reads, in one-letter code: MAENTTTIAFTEEQEALVVKSWNAMKKDSAELSFKFFSKILEIAPPAKQLFSFLRDSEVPLDQNPKLKPHAMSVFLMTCESAAQLRKEGKVTVRESNLKKLGATHFKKGVIPEHFEVTKQALLDTIKEAVPELWSLELKDAWAIAHDQLASAIIAEMKPES.

One can recognise a Globin domain in the interval 9–158 (AFTEEQEALV…LASAIIAEMK (150 aa)). Residues 42–46 (EIAPP) carry the Homodimerization motif. 6 residues coordinate heme b: S52, K66, H70, K100, T104, and H105. Residues 112–124 (PEHFEVTKQALLD) carry the Homodimerization motif.

The protein belongs to the plant globin family. In terms of assembly, homodimer. Heme b serves as cofactor. Mainly expressed in root nodules and leaves, and, to a lower extent, in roots, stems, flowers and fruits. Accumulates in mature root nodules.

The enzyme catalyses Fe(III)-heme b-[protein] + nitric oxide + H2O = Fe(II)-heme b-[protein] + nitrite + 2 H(+). Functionally, phytoglobin that reduces nitrite to nitric oxide (NO) under anoxic conditions (e.g. during flooding or in waterlogged soil) and upon root nodulation. Required for general plant development and during nodulation, especially for the onset of symbiosis. Monitors nitric oxide (NO) levels during early phase of the nitrogen-fixing symbiosis and buffers oxygen in functioning nodules. Necessary for the production of pods. May not function as an oxygen storage or transport protein. Has an unusually high affinity for O(2) through a hexacoordinate heme iron because of a very low dissociation constant. This is Anaerobic nitrite reductase Glb1-2 from Lotus japonicus (Lotus corniculatus var. japonicus).